The chain runs to 492 residues: KAT8 regulatory NSL complex subunit 2 (492 aa).

K78 participates in a covalent cross-link: Glycyl lysine isopeptide (Lys-Gly) (interchain with G-Cter in SUMO2). A disordered region spans residues 127 to 182 (LGSQTPESSRSEASRILDEDSWSDGEQEPITVDQTWRGDPDSEADSIDSDQEDPLK). T131 carries the post-translational modification Phosphothreonine. The segment covering 135–144 (SRSEASRILD) has biased composition (basic and acidic residues). 5 positions are modified to phosphoserine: S147, S149, S168, S172, and S175. Over residues 167–178 (DSEADSIDSDQE) the composition is skewed to acidic residues. The segment at 308–364 (DVRCSNQSLPMTRHCLTHICQDTNQVLFKCCQGSEEVPCNKPVPVSLSEDPCCPLHF) is required for interaction with other NSL complex members. The tract at residues 455–492 (AGDGCRSQGSRNSEKGSAPLSQSGLATANGKPEPTSIS) is disordered.

In terms of assembly, component of the NSL complex at least composed of KAT8/MOF, KANSL1, KANSL2, KANSL3, MCRS1, PHF20, OGT1/OGT, WDR5 and HCFC1.

The protein localises to the nucleus. It is found in the mitochondrion. Functionally, non-catalytic component of the NSL histone acetyltransferase complex, a multiprotein complex that mediates histone H4 acetylation at 'Lys-5'- and 'Lys-8' (H4K5ac and H4K8ac) at transcription start sites and promotes transcription initiation. Required for NSL complex stability and for transcription of intraciliary transport genes in both ciliated and non-ciliated cells by regulating histone H4 acetylation at 'Lys-5'- and 'Lys-12' (H4K5ac and H4K12ac). This is necessary for cilium assembly in ciliated cells and for organization of the microtubule cytoskeleton in non-ciliated cells. Required within the NSL complex to maintain nuclear architecture stability by promoting KAT8-mediated acetylation of lamin LMNA. This Pongo abelii (Sumatran orangutan) protein is KAT8 regulatory NSL complex subunit 2 (KANSL2).